The sequence spans 1335 residues: Bifunctional autolysin (1335 aa).

The N-terminal stretch at 1 to 29 (MAKKFNYKLPSMVALTLFGTAFTAHQANA) is a signal peptide. 3 disordered regions span residues 51–88 (QAEK…QSTT), 100–262 (NEIS…KYKE), and 514–535 (WGTT…NNKL). Composition is skewed to polar residues over residues 58 to 88 (EVTQ…QSTT), 100 to 127 (NEIS…VTKN), 143 to 155 (TDTN…QSVA), 176 to 223 (TASQ…NASG), and 244 to 258 (SLNN…TTSY). Positions 303–863 (VSSQKTSSLP…LSTQSTPAPK (561 aa)) are N-acetylmuramoyl-L-alanine amidase. The segment covering 515-531 (GTTSTKPSQPSKPSGGT) has biased composition (low complexity). GW domains follow at residues 533-610 (NKLT…YNTA), 612-686 (APVK…TASK), 700-774 (TVTN…YNTA), 776-850 (SPVK…APSK), 868-943 (STQT…TQNI), 945-1020 (KQTQ…QNST), and 1023-1096 (QSTP…KEKI). The endo-beta-N-acetylglucosaminidase stretch occupies residues 864-1335 (QVKPSTQTVN…GKYFEIPTYK (472 aa)).

In the N-terminal section; belongs to the N-acetylmuramoyl-L-alanine amidase 2 family. This sequence in the C-terminal section; belongs to the glycosyl hydrolase 73 family. Oligomer; forms a ring structure at the cell surface which is important for efficient partitioning of daughter cells after cell division. Post-translationally, undergoes proteolytic processing to generate the two extracellular lytic enzymes, probably at the septal region on the cell surface.

It localises to the secreted. It catalyses the reaction Hydrolyzes the link between N-acetylmuramoyl residues and L-amino acid residues in certain cell-wall glycopeptides.. The catalysed reaction is an N(4)-(oligosaccharide-(1-&gt;3)-[oligosaccharide-(1-&gt;6)]-beta-D-Man-(1-&gt;4)-beta-D-GlcNAc-(1-&gt;4)-alpha-D-GlcNAc)-L-asparaginyl-[protein] + H2O = an oligosaccharide-(1-&gt;3)-[oligosaccharide-(1-&gt;6)]-beta-D-Man-(1-&gt;4)-D-GlcNAc + N(4)-(N-acetyl-beta-D-glucosaminyl)-L-asparaginyl-[protein]. Endohydrolysis of the di-N-acetylchitobiosyl unit in high-mannose glycopeptides and glycoproteins containing the -[(Man)5(GlcNAc)2]-Asn structure. One N-acetyl-D-glucosamine residue remains attached to the protein; the rest of the oligosaccharide is released intact. Cleaves the peptidoglycan connecting the daughter cells at the end of the cell division cycle, resulting in the separation of the two newly divided cells. Acts as an autolysin in penicillin-induced lysis. As a bacterial surface-associated protein, mediates attachment to polystyrene surfaces, contributing to biofilm formation. Also has vitronectin-binding activity. In Staphylococcus epidermidis, this protein is Bifunctional autolysin (atl).